The following is a 521-amino-acid chain: Probable methylmalonate-semialdehyde/malonate-semialdehyde dehydrogenase [acylating], mitochondrial (521 aa).

Alanine 170, phenylalanine 172, lysine 196, glutamate 199, arginine 200, and serine 249 together coordinate NAD(+). The active-site Nucleophile is cysteine 304. Glutamate 404 provides a ligand contact to NAD(+).

The protein belongs to the aldehyde dehydrogenase family. As to quaternary structure, homotetramer.

It localises to the mitochondrion. It carries out the reaction 2-methyl-3-oxopropanoate + NAD(+) + CoA + H2O = propanoyl-CoA + hydrogencarbonate + NADH + H(+). The enzyme catalyses 3-oxopropanoate + NAD(+) + CoA + H2O = hydrogencarbonate + acetyl-CoA + NADH + H(+). Its function is as follows. Probable malonate and methylmalonate semialdehyde dehydrogenase involved in the catabolism of valine, thymine, and compounds catabolized by way of beta-alanine, including uracil and cytidine. The sequence is that of Probable methylmalonate-semialdehyde/malonate-semialdehyde dehydrogenase [acylating], mitochondrial from Anopheles gambiae (African malaria mosquito).